The chain runs to 500 residues: ATP synthase subunit beta (500 aa).

157–164 (GGAGVGKT) provides a ligand contact to ATP.

This sequence belongs to the ATPase alpha/beta chains family. As to quaternary structure, F-type ATPases have 2 components, CF(1) - the catalytic core - and CF(0) - the membrane proton channel. CF(1) has five subunits: alpha(3), beta(3), gamma(1), delta(1), epsilon(1). CF(0) has three main subunits: a(1), b(2) and c(9-12). The alpha and beta chains form an alternating ring which encloses part of the gamma chain. CF(1) is attached to CF(0) by a central stalk formed by the gamma and epsilon chains, while a peripheral stalk is formed by the delta and b chains.

It is found in the cell inner membrane. The enzyme catalyses ATP + H2O + 4 H(+)(in) = ADP + phosphate + 5 H(+)(out). Functionally, produces ATP from ADP in the presence of a proton gradient across the membrane. The catalytic sites are hosted primarily by the beta subunits. In Salinibacter ruber (strain DSM 13855 / M31), this protein is ATP synthase subunit beta.